A 456-amino-acid chain; its full sequence is F-box/FBD/LRR-repeat protein At1g13780 (456 aa).

The F-box domain occupies 9–55 (FDRISELPESLISQILLHLPTKASVKTSVLSTRWKNLWLNVPGLDLN). LRR repeat units follow at residues 197 to 220 (LEELIYLHDDKLVVTRVRSRSLKR), 243 to 266 (APGLEYMSLKADHFDRIVVKNLTS), 302 to 325 (ISSVRHMVISHNTVKALDLYSKVG), and 355 to 379 (FPNLKHLILETECPVEVMEKFELVN). The FBD domain occupies 372 to 424 (MEKFELVNVPRCFVSTLEHVEIKGLFDWGEQDMKIASYFLENSAVLKKLILSF).

This chain is F-box/FBD/LRR-repeat protein At1g13780, found in Arabidopsis thaliana (Mouse-ear cress).